The following is a 244-amino-acid chain: UPF0280 protein MJ1526 (244 aa).

It belongs to the UPF0280 family.

The chain is UPF0280 protein MJ1526 from Methanocaldococcus jannaschii (strain ATCC 43067 / DSM 2661 / JAL-1 / JCM 10045 / NBRC 100440) (Methanococcus jannaschii).